The sequence spans 615 residues: Alpha-terpinene synthase TPS33PK, chloroplastic (615 aa).

Residues 1 to 33 (MFCRLGVHQFSPLSLILNTTKLARASTLSSACY) constitute a chloroplast transit peptide. 5 residues coordinate (2E)-geranyl diphosphate: glutamate 334, valine 371, leucine 375, leucine 513, and serine 516. Valine 371 and leucine 375 together coordinate Mg(2+). Positions 371-375 (VYGTL) match the DDXXD motif motif. Mg(2+)-binding residues include serine 516, methionine 520, and aspartate 524.

This sequence belongs to the terpene synthase family. Tpsb subfamily. It depends on Mg(2+) as a cofactor. Requires Mn(2+) as cofactor.

The protein localises to the plastid. It localises to the chloroplast. It catalyses the reaction (2E)-geranyl diphosphate = alpha-terpinene + diphosphate. The catalysed reaction is (2E)-geranyl diphosphate = gamma-terpinene + diphosphate. It functions in the pathway secondary metabolite biosynthesis; terpenoid biosynthesis. Involved in monoterpene (C10) olefins biosynthesis, constituants of cannabinoids and terpenoids-rich resins. Catalyzes mainly the conversion of (2E)-geranyl diphosphate to alpha-terpinene and gamma-terpinene. The polypeptide is Alpha-terpinene synthase TPS33PK, chloroplastic (Cannabis sativa (Hemp)).